The chain runs to 394 residues: Na(+)/H(+) antiporter NhaA 2 (394 aa).

Helical transmembrane passes span 13–33, 58–78, 93–113, 124–144, 153–173, 176–196, 208–228, 260–280, 291–311, 327–347, and 361–381; these read FGGV…NGFL, LILW…GLEL, IALP…IFWA, GWAI…MLLG, IFLL…IAIF, TKLS…LWVL, ILVT…ATIA, YFIL…GVQI, IFFG…YIFI, FYGV…VNSL, and LGIL…LLVF.

The protein belongs to the NhaA Na(+)/H(+) (TC 2.A.33) antiporter family.

The protein resides in the cell inner membrane. It carries out the reaction Na(+)(in) + 2 H(+)(out) = Na(+)(out) + 2 H(+)(in). In terms of biological role, na(+)/H(+) antiporter that extrudes sodium in exchange for external protons. The chain is Na(+)/H(+) antiporter NhaA 2 from Campylobacter fetus subsp. fetus (strain 82-40).